A 222-amino-acid polypeptide reads, in one-letter code: Glutathione S-transferase alpha-1 (222 aa).

Residue methionine 1 is modified to N-acetylmethionine. Residues glycine 3–glycine 83 enclose the GST N-terminal domain. Lysine 4 bears the N6-succinyllysine mark. Glutathione-binding positions include tyrosine 9, lysine 45, glutamine 54 to valine 55, and glutamine 67 to threonine 68. Residues aspartate 85 to valine 208 enclose the GST C-terminal domain.

Belongs to the GST superfamily. Alpha family. Homodimer. Homodimer or heterodimer of GSTA1 and GSTA2.

It is found in the cytoplasm. It catalyses the reaction RX + glutathione = an S-substituted glutathione + a halide anion + H(+). The enzyme catalyses prostaglandin A2 + glutathione = prostaglandin A2-S-(R)-glutathione. The catalysed reaction is prostaglandin J2 + glutathione = prostaglandin J2-S-(R)-glutathione. It carries out the reaction (13S)-hydroperoxy-(9Z,11E)-octadecadienoate + 2 glutathione = (13S)-hydroxy-(9Z,11E)-octadecadienoate + glutathione disulfide + H2O. It catalyses the reaction androst-5-ene-3,17-dione = androst-4-ene-3,17-dione. Functionally, glutathione S-transferase that catalyzes the nucleophilic attack of the sulfur atom of glutathione on the electrophilic groups of a wide range of exogenous and endogenous compounds. Involved in the formation of glutathione conjugates of both prostaglandin A2 (PGA2) and prostaglandin J2 (PGJ2). It also catalyzes the isomerization of D5-androstene-3,17-dione (AD) into D4-androstene-3,17-dione and may therefore play an important role in hormone biosynthesis. Through its glutathione-dependent peroxidase activity toward the fatty acid hydroperoxide (13S)-hydroperoxy-(9Z,11E)-octadecadienoate/13-HPODE it is also involved in the metabolism of oxidized linoleic acid. The protein is Glutathione S-transferase alpha-1 (Gsta1) of Rattus norvegicus (Rat).